Reading from the N-terminus, the 354-residue chain is Probable disease resistance protein At5g45490 (354 aa).

The stretch at 33–53 forms a coiled coil; sequence AKGNLEKKRDDNEEEERLKTE. The NB-ARC domain maps to 45–122; that stretch reads EEEERLKTES…VYAPRVWVSM (78 aa). 91–98 lines the ATP pocket; the sequence is GEYGVGKT. The interval 328–354 is disordered; that stretch reads DDEVGPVGSTHGQTDSSNRQPANQASS. Residues 337 to 354 are compositionally biased toward polar residues; sequence THGQTDSSNRQPANQASS.

Its function is as follows. Possible disease resistance protein. This chain is Probable disease resistance protein At5g45490, found in Arabidopsis thaliana (Mouse-ear cress).